Here is a 668-residue protein sequence, read N- to C-terminus: tRNA 5-methylaminomethyl-2-thiouridine biosynthesis bifunctional protein MnmC (668 aa).

Residues 1–245 form a tRNA (mnm(5)s(2)U34)-methyltransferase region; that stretch reads MKHYSIQPAN…KREMLCGVME (245 aa). The tract at residues 270–668 is FAD-dependent cmnm(5)s(2)U34 oxidoreductase; that stretch reads IGGGIACALL…LLKGKAVKAG (399 aa).

It in the N-terminal section; belongs to the methyltransferase superfamily. tRNA (mnm(5)s(2)U34)-methyltransferase family. The protein in the C-terminal section; belongs to the DAO family. FAD is required as a cofactor.

It localises to the cytoplasm. It carries out the reaction 5-aminomethyl-2-thiouridine(34) in tRNA + S-adenosyl-L-methionine = 5-methylaminomethyl-2-thiouridine(34) in tRNA + S-adenosyl-L-homocysteine + H(+). Catalyzes the last two steps in the biosynthesis of 5-methylaminomethyl-2-thiouridine (mnm(5)s(2)U) at the wobble position (U34) in tRNA. Catalyzes the FAD-dependent demodification of cmnm(5)s(2)U34 to nm(5)s(2)U34, followed by the transfer of a methyl group from S-adenosyl-L-methionine to nm(5)s(2)U34, to form mnm(5)s(2)U34. In Shigella boydii serotype 18 (strain CDC 3083-94 / BS512), this protein is tRNA 5-methylaminomethyl-2-thiouridine biosynthesis bifunctional protein MnmC.